We begin with the raw amino-acid sequence, 194 residues long: Peroxiredoxin 2 (194 aa).

Positions 2 to 160 constitute a Thioredoxin domain; it reads PQLQKPAPAF…TLRLVQAFQY (159 aa). The active-site Cysteine sulfenic acid (-SOH) intermediate is the cysteine 47. Residue threonine 193 is modified to Phosphothreonine. At serine 194 the chain carries Phosphoserine.

Belongs to the peroxiredoxin family. AhpC/Prx1 subfamily. As to quaternary structure, homodimer; disulfide-linked, upon oxidation. 5 homodimers assemble to form a ring-like decamer. Also exists as a monomer. In terms of processing, the enzyme can be inactivated by further oxidation of the cysteine sulfenic acid (C(P)-SOH) to sulphinic acid (C(P)-SO2H) instead of its condensation to a disulfide bond. It can be reactivated by forming a transient disulfide bond with sulfiredoxin SRXN1, which reduces the cysteine sulfinic acid in an ATP- and Mg-dependent manner. Post-translationally, conjugated to URM1, a ubiquitin-like protein. As to expression, detected in the head and body (at protein level).

It is found in the cytoplasm. It carries out the reaction a hydroperoxide + [thioredoxin]-dithiol = an alcohol + [thioredoxin]-disulfide + H2O. Functionally, thiol-specific peroxidase that catalyzes the reduction of hydrogen peroxide and organic hydroperoxides to water and alcohols, respectively. Plays a role in cell protection against oxidative stress by detoxifying peroxides and as sensor of hydrogen peroxide-mediated signaling events. Might participate in the signaling cascades of growth factors and tumor necrosis factor-alpha by regulating the intracellular concentrations of H(2)O(2). Reduces an intramolecular disulfide bond in GDPD5 that gates the ability to GDPD5 to drive postmitotic motor neuron differentiation. The chain is Peroxiredoxin 2 from Drosophila melanogaster (Fruit fly).